A 64-amino-acid polypeptide reads, in one-letter code: Large ribosomal subunit protein bL35 (64 aa).

This sequence belongs to the bacterial ribosomal protein bL35 family.

The polypeptide is Large ribosomal subunit protein bL35 (Chloroherpeton thalassium (strain ATCC 35110 / GB-78)).